The chain runs to 684 residues: Fidgetin-like protein 2 (684 aa).

The span at 27–41 shows a compositional bias: polar residues; that stretch reads PEQHLDVSSTTSSPA. Disordered stretches follow at residues 27-48, 99-179, and 292-403; these read PEQHLDVSSTTSSPAHKSELYS, PGAF…PHSS, and LDEE…SDPM. Residues 160–179 show a composition bias toward low complexity; it reads SNLSDSGYSGSSSCSGPHSS. Ala431 serves as a coordination point for ATP.

It belongs to the AAA ATPase family. Mg(2+) serves as cofactor. As to expression, highly expressed in vascular endothelial cells and neuronal cells.

It is found in the cytoplasm. The protein resides in the cell cortex. The catalysed reaction is ATP + H2O = ADP + phosphate + H(+). Microtubule-severing enzyme that negatively regulates cell migration and wound healing. In migrating cells, targets dynamic microtubules (MTs) at the leading edge and severs them, thereby suppressing motility. Negative regulator of axon regeneration that suppresses axonal growth by selectively severing dynamic MTs in the distal axon shaft and growth cone. Contributes to proper cell branching during endothelial and neuronal development. The chain is Fidgetin-like protein 2 (fignl2) from Danio rerio (Zebrafish).